Consider the following 420-residue polypeptide: uncharacterized protein (420 aa).

A YcaO domain is found at 79–420; the sequence is GKGIDNEAAM…AVNTIRGAES (342 aa).

This is an uncharacterized protein from Rhizobium leguminosarum bv. trifolii.